A 374-amino-acid chain; its full sequence is GDSL esterase/lipase At3g50400 (374 aa).

Positions 1–26 (MKKSIFFVPVLVLFFFGSRFSRVASA) are cleaved as a signal peptide. Serine 41 functions as the Nucleophile in the catalytic mechanism. Residues asparagine 104 and asparagine 125 are each glycosylated (N-linked (GlcNAc...) asparagine). Residues aspartate 339 and histidine 342 contribute to the active site.

It belongs to the 'GDSL' lipolytic enzyme family.

The protein localises to the secreted. In Arabidopsis thaliana (Mouse-ear cress), this protein is GDSL esterase/lipase At3g50400.